The following is a 190-amino-acid chain: Guanylate kinase (190 aa).

A Guanylate kinase-like domain is found at Gly8–Leu188. Gly15–Ser22 contributes to the ATP binding site.

This sequence belongs to the guanylate kinase family.

The protein resides in the cytoplasm. It catalyses the reaction GMP + ATP = GDP + ADP. Functionally, essential for recycling GMP and indirectly, cGMP. The protein is Guanylate kinase of Corynebacterium glutamicum (strain ATCC 13032 / DSM 20300 / JCM 1318 / BCRC 11384 / CCUG 27702 / LMG 3730 / NBRC 12168 / NCIMB 10025 / NRRL B-2784 / 534).